Reading from the N-terminus, the 477-residue chain is Glycogen synthase (477 aa).

Lys15 lines the ADP-alpha-D-glucose pocket.

It belongs to the glycosyltransferase 1 family. Bacterial/plant glycogen synthase subfamily.

The enzyme catalyses [(1-&gt;4)-alpha-D-glucosyl](n) + ADP-alpha-D-glucose = [(1-&gt;4)-alpha-D-glucosyl](n+1) + ADP + H(+). It functions in the pathway glycan biosynthesis; glycogen biosynthesis. Synthesizes alpha-1,4-glucan chains using ADP-glucose. The polypeptide is Glycogen synthase (Escherichia coli O139:H28 (strain E24377A / ETEC)).